A 424-amino-acid chain; its full sequence is Serine incorporator 5 (424 aa).

The Extracellular portion of the chain corresponds to 1–6 (MYALYF). Residues 7–23 (ILVVVLCCIMMSTTVAH) form a helical membrane-spanning segment. Over 24-52 (KMKEHIPFFEDMCKGIKAGDTCEKLVGYS) the chain is Cytoplasmic. The chain crosses the membrane as a helical span at residues 53-73 (AVYRVCFGMACFFFIFCLLTL). Topologically, residues 74 to 87 (KINNSKSCRAHIHN) are extracellular. N-linked (GlcNAc...) asparagine glycosylation is present at N76. The chain crosses the membrane as a helical span at residues 88–108 (GFWFFKLLLLGAMCSGAFFIP). Residues 109 to 119 (DQDTFLNAWRY) lie on the Cytoplasmic side of the membrane. A helical membrane pass occupies residues 120-140 (VGAVGGFLFIGIQLLLLVEFA). Residues 141–161 (HKWNKNWTAGTASNKLWYASL) lie on the Extracellular side of the membrane. N146 carries N-linked (GlcNAc...) asparagine glycosylation. The helical transmembrane segment at 162-182 (ALVTLIMYSIATGGLVLMAVF) threads the bilayer. At 183-193 (YTQKDGCMENK) the chain is on the cytoplasmic side. A helical membrane pass occupies residues 194 to 214 (ILLGVNGGLCVLISLVAISPC). Residues 215-221 (VQNRQPH) lie on the Extracellular side of the membrane. The helical transmembrane segment at 222 to 242 (SGLLQSGVISCYVTYLTFSAL) threads the bilayer. Residues 243–274 (SSKPAEVVLDEHGKNVTICVPDFGQDLYRDEN) are Cytoplasmic-facing. A helical transmembrane segment spans residues 275–295 (LVTILGTSLLIGCILYSCLTS). The Extracellular segment spans residues 296–348 (TTRSSSDALQGRYAAPELEIARCCFCFSPGGEDTEEQQQGKEGPRVIYDEKKG). The helical transmembrane segment at 349–369 (TVYIYSYFHFVFFLASLYVMM) threads the bilayer. Residues 370-391 (TVTNWFNYESANIESFFSGSWS) are Cytoplasmic-facing. Residues 392-412 (IFWVKMASCWICVLLYLCTLV) traverse the membrane as a helical segment. The Extracellular portion of the chain corresponds to 413–424 (APLCCPTREFSV).

This sequence belongs to the TDE1 family.

Its subcellular location is the cell membrane. The enzyme catalyses a 1,2-diacyl-sn-glycero-3-phospho-L-serine(in) = a 1,2-diacyl-sn-glycero-3-phospho-L-serine(out). It catalyses the reaction a 1,2-diacyl-sn-glycero-3-phosphocholine(in) = a 1,2-diacyl-sn-glycero-3-phosphocholine(out). It carries out the reaction a 1,2-diacyl-sn-glycero-3-phosphoethanolamine(in) = a 1,2-diacyl-sn-glycero-3-phosphoethanolamine(out). Its function is as follows. Restriction factor required to restrict infectivity of gammaretroviruses: acts by inhibiting an early step of viral infection. Impairs the penetration of the viral particle into the cytoplasm. Non-ATP-dependent, non-specific lipid transporter for phosphatidylserine, phosphatidylcholine, and phosphatidylethanolamine. Functions as a scramblase that flips lipids in both directions across the membrane. Phospholipid scrambling results in gammaretroviral surface exposure of phosphatidylserine and loss of membrane asymmetry, which leads to loss of infectivity. Enhances the incorporation of serine into phosphatidylserine and sphingolipids. May play a role in providing serine molecules for the formation of myelin glycosphingolipids in oligodendrocytes. The chain is Serine incorporator 5 (SERINC5) from Macaca fascicularis (Crab-eating macaque).